A 185-amino-acid polypeptide reads, in one-letter code: ATP synthase subunit delta (185 aa).

It belongs to the ATPase delta chain family. In terms of assembly, F-type ATPases have 2 components, F(1) - the catalytic core - and F(0) - the membrane proton channel. F(1) has five subunits: alpha(3), beta(3), gamma(1), delta(1), epsilon(1). CF(0) has four main subunits: a(1), b(2) and c(10-14). The alpha and beta chains form an alternating ring which encloses part of the gamma chain. F(1) is attached to F(0) by a central stalk formed by the gamma and epsilon chains, while a peripheral stalk is formed by the delta and b chains.

Its subcellular location is the cell membrane. In terms of biological role, f(1)F(0) ATP synthase produces ATP from ADP in the presence of a proton or sodium gradient. F-type ATPases consist of two structural domains, F(1) containing the extramembraneous catalytic core and F(0) containing the membrane proton channel, linked together by a central stalk and a peripheral stalk. During catalysis, ATP synthesis in the catalytic domain of F(1) is coupled via a rotary mechanism of the central stalk subunits to proton translocation. Functionally, this protein is part of the stalk that links CF(0) to CF(1). It either transmits conformational changes from CF(0) to CF(1) or is implicated in proton conduction. The polypeptide is ATP synthase subunit delta (Heliobacterium modesticaldum (strain ATCC 51547 / Ice1)).